A 453-amino-acid chain; its full sequence is Phosphoglucosamine mutase (453 aa).

The Phosphoserine intermediate role is filled by Ser-102. Mg(2+) is bound by residues Ser-102, Asp-244, Asp-246, and Asp-248. The residue at position 102 (Ser-102) is a Phosphoserine.

The protein belongs to the phosphohexose mutase family. Mg(2+) serves as cofactor. In terms of processing, activated by phosphorylation.

It catalyses the reaction alpha-D-glucosamine 1-phosphate = D-glucosamine 6-phosphate. Its function is as follows. Catalyzes the conversion of glucosamine-6-phosphate to glucosamine-1-phosphate. This chain is Phosphoglucosamine mutase, found in Pelobacter propionicus (strain DSM 2379 / NBRC 103807 / OttBd1).